Consider the following 248-residue polypeptide: 2,3-bisphosphoglycerate-dependent phosphoglycerate mutase (248 aa).

Substrate-binding positions include Arg8–Asn15, Thr21–Gly22, Arg60, Glu87–Tyr90, Lys98, Arg114–Arg115, and Gly183–Asn184. Catalysis depends on His9, which acts as the Tele-phosphohistidine intermediate. Glu87 (proton donor/acceptor) is an active-site residue.

It belongs to the phosphoglycerate mutase family. BPG-dependent PGAM subfamily. In terms of assembly, homodimer.

It carries out the reaction (2R)-2-phosphoglycerate = (2R)-3-phosphoglycerate. The protein operates within carbohydrate degradation; glycolysis; pyruvate from D-glyceraldehyde 3-phosphate: step 3/5. In terms of biological role, catalyzes the interconversion of 2-phosphoglycerate and 3-phosphoglycerate. The chain is 2,3-bisphosphoglycerate-dependent phosphoglycerate mutase from Burkholderia orbicola (strain MC0-3).